The following is a 331-amino-acid chain: tRNA-cytidine(32) 2-sulfurtransferase (331 aa).

A PP-loop motif motif is present at residues 71-76; sequence SGGKDS. Residues Cys146, Cys149, and Cys237 each contribute to the [4Fe-4S] cluster site.

This sequence belongs to the TtcA family. As to quaternary structure, homodimer. The cofactor is Mg(2+). [4Fe-4S] cluster serves as cofactor.

The protein resides in the cytoplasm. It catalyses the reaction cytidine(32) in tRNA + S-sulfanyl-L-cysteinyl-[cysteine desulfurase] + AH2 + ATP = 2-thiocytidine(32) in tRNA + L-cysteinyl-[cysteine desulfurase] + A + AMP + diphosphate + H(+). It functions in the pathway tRNA modification. Functionally, catalyzes the ATP-dependent 2-thiolation of cytidine in position 32 of tRNA, to form 2-thiocytidine (s(2)C32). The sulfur atoms are provided by the cysteine/cysteine desulfurase (IscS) system. This Burkholderia multivorans (strain ATCC 17616 / 249) protein is tRNA-cytidine(32) 2-sulfurtransferase.